The primary structure comprises 250 residues: Putative apoptosis inhibitor ORF99 (250 aa).

A BIR repeat occupies 13–78 (RVNSFGGWSK…KFSGDCLYLK (66 aa)).

Functionally, may act as an apoptosis inhibitor. The sequence is that of Putative apoptosis inhibitor ORF99 from Ostreid herpesvirus 1 (isolate France) (OsHV-1).